The primary structure comprises 864 residues: MAKVSFIFVAIALITGNVLCQTDATYAVSSSAPGYKIDGHVRKTEAGLHIPLTLNSRGNKKTGIDTFGKTIKDITVDVEYETEERLHVKISDKAKKQYLVPDSPLGFERPQIKHYVSPKHSNLDFQYTAKPFSFKVVRKDDKTTIFDTTNMPLVFEDQYLELSTKVPEDANIYGIGEVTAPFRRTHNVTTLWARDNPDDFYRNIYGAHPYYQEVRDGKAHGALLMNAHGMDVITTEGRITYKVIGGILDFYFFAPKSGKPNDLSIAYTDLIGKPMMPSHWMLGWHHCRYGYPNIDKVETVKRKYKEANIPLQTVWVDIDYMEETKDFTFDKVNFPQDRMIGLGEQLHKDGQNYVVMVDPAISANTTYEPYVRGTEMDVWIKNADGSDFIGSVWPGFTTFPDWWHPNATKYWNKEIIDFVDMLGVDGLWIDMNEPASFCLGSCGSGKVDAGNQPYRWTYTEEEQAANHTRWEKELKAMGNPPGEERNLLYPKYAINNGAGNLSEFTVATTALHYGNIPHYDIHNLYGHAESHITRQALIKHKNKIRPFVLTRSSFPGSGKSVGHWTGDNHSFWPYLKNSIANILNFQMFGVSYSGADVCGFNSDTTEELCTRWMEIGAFYPFARNHNNNAAKDQEPYLWESTAEASRIAINTRYEMLPYFYTLFEESNRLGLGVWRPLIFEYPAYEELVSNDVQTLVGSDILLSPVLDEGKTSVKAQFPGGQWYDWYTHELTVDNKSNKKVKTVTLDAPLTHIPIHIRGGAIIPTKTPKYTVGETFATPYNLVIALDKKGQASGRLYIDDGESLEVKSSSGYHFHLQEWSPQGFWQVWLQEGRKDWLHHHYWQARQQVAKGSRWQEDYQIDPWQE.

The signal sequence occupies residues 1-22 (MAKVSFIFVAIALITGNVLCQT). N-linked (GlcNAc...) asparagine glycans are attached at residues asparagine 187, asparagine 364, and asparagine 406. Aspartate 430 (nucleophile) is an active-site residue. Glutamate 433 is a catalytic residue. Residues asparagine 466 and asparagine 500 are each glycosylated (N-linked (GlcNAc...) asparagine). The active-site Proton donor is the aspartate 567. N-linked (GlcNAc...) asparagine glycosylation is found at asparagine 568 and asparagine 734.

It belongs to the glycosyl hydrolase 31 family.

It carries out the reaction Hydrolysis of terminal, non-reducing (1-&gt;4)-linked alpha-D-glucose residues with release of alpha-D-glucose.. In terms of biological role, hydrolyzes not only malto-oligosaccharides but also soluble starch. This Mucor javanicus protein is Alpha-glucosidase.